Consider the following 413-residue polypeptide: Gamma-glutamyl phosphate reductase (413 aa).

The protein belongs to the gamma-glutamyl phosphate reductase family.

It is found in the cytoplasm. It catalyses the reaction L-glutamate 5-semialdehyde + phosphate + NADP(+) = L-glutamyl 5-phosphate + NADPH + H(+). Its pathway is amino-acid biosynthesis; L-proline biosynthesis; L-glutamate 5-semialdehyde from L-glutamate: step 2/2. Catalyzes the NADPH-dependent reduction of L-glutamate 5-phosphate into L-glutamate 5-semialdehyde and phosphate. The product spontaneously undergoes cyclization to form 1-pyrroline-5-carboxylate. The polypeptide is Gamma-glutamyl phosphate reductase (Lactococcus lactis subsp. lactis (strain IL1403) (Streptococcus lactis)).